A 374-amino-acid chain; its full sequence is MARSLTWGCCPWCLTEEEKTAARIDQEINRILLEQKKQEREELKLLLLGPGESGKSTFIKQMRIIHGVGYSEEDRRAFRLLIYQNIFVSMQAMIDAMDRLQIPFSRPDSKQHASLVMTQDPYKVSTFEKPYAVAMQYLWRDAGIRACYERRREFHLLDSAVYYLSHLERISEDSYIPTAQDVLRSRMPTTGINEYCFSVKKTKLRIVDVGGQRSERRKWIHCFENVIALIYLASLSEYDQCLEENDQENRMEESLALFSTILELPWFKSTSVILFLNKTDILEDKIHTSHLATYFPSFQGPRRDAEAAKSFILDMYARVYASCAEPQDGGRKGSRARRFFAHFTCATDTQSVRSVFKDVRDSVLARYLDEINLL.

In terms of domain architecture, G-alpha spans 41–374 (EELKLLLLGP…ARYLDEINLL (334 aa)). Residues 44–57 (KLLLLGPGESGKST) are G1 motif. GTP is bound by residues 49-56 (GPGESGKS), 183-189 (LRSRMPT), 208-212 (DVGGQ), 277-280 (NKTD), and alanine 346. Positions 56 and 189 each coordinate Mg(2+). The tract at residues 181–189 (DVLRSRMPT) is G2 motif. The G3 motif stretch occupies residues 204–213 (LRIVDVGGQR). The segment at 273–280 (ILFLNKTD) is G4 motif. Positions 344 to 349 (TCATDT) are G5 motif.

The protein belongs to the G-alpha family. G(q) subfamily. In terms of assembly, g proteins are composed of 3 units; alpha, beta and gamma. The alpha chain contains the guanine nucleotide binding site. In terms of tissue distribution, expressed primarily in hematopoietic cells. Coexpressed with EDG6 at the same relative levels in all tissues examined, with the highest levels in adult spleen and lung.

In terms of biological role, guanine nucleotide-binding proteins (G proteins) are involved as modulators or transducers in various transmembrane signaling systems. The protein is Guanine nucleotide-binding protein subunit alpha-15 (Gna15) of Mus musculus (Mouse).